The chain runs to 205 residues: uncharacterized protein (205 aa).

5 consecutive transmembrane segments (helical) span residues 4–24 (LAFL…AIDD), 105–125 (KWFI…LWIL), 130–150 (FLLF…KIPN), 151–171 (WLFN…VPEC), and 182–202 (ITIP…KFII).

Its subcellular location is the cell membrane. This is an uncharacterized protein from Methanocaldococcus jannaschii (strain ATCC 43067 / DSM 2661 / JAL-1 / JCM 10045 / NBRC 100440) (Methanococcus jannaschii).